Consider the following 446-residue polypeptide: Exodeoxyribonuclease 7 large subunit (446 aa).

The protein belongs to the XseA family. Heterooligomer composed of large and small subunits.

It localises to the cytoplasm. It carries out the reaction Exonucleolytic cleavage in either 5'- to 3'- or 3'- to 5'-direction to yield nucleoside 5'-phosphates.. Functionally, bidirectionally degrades single-stranded DNA into large acid-insoluble oligonucleotides, which are then degraded further into small acid-soluble oligonucleotides. The polypeptide is Exodeoxyribonuclease 7 large subunit (Acholeplasma laidlawii (strain PG-8A)).